The primary structure comprises 233 residues: C-type lectin domain family 2 member D6 (233 aa).

Positions 1–45 (MPSSAHLQDSPPLLSRTLTQNEGQTSLRQSSSCGPSATSASESLS) are disordered. Residues 1 to 73 (MPSSAHLQDS…GIILPESPAK (73 aa)) are Cytoplasmic-facing. Positions 16–29 (RTLTQNEGQTSLRQ) are enriched in polar residues. A compositionally biased stretch (low complexity) spans 30-43 (SSSCGPSATSASES). The chain crosses the membrane as a helical; Signal-anchor for type II membrane protein span at residues 74–94 (LLCCCAVIVVLSVAVVALSVA). Residues 95 to 233 (LSVKKTPQIS…KLNSYTSQCQ (139 aa)) are Extracellular-facing. One can recognise a C-type lectin domain in the interval 119-230 (VGNKCYYFNE…ICSKLNSYTS (112 aa)). The N-linked (GlcNAc...) asparagine glycan is linked to asparagine 132.

The protein resides in the cell membrane. In terms of biological role, lectin-type cell surface receptor. The sequence is that of C-type lectin domain family 2 member D6 (Clec2d6) from Rattus norvegicus (Rat).